A 500-amino-acid chain; its full sequence is NADH-quinone oxidoreductase subunit N (500 aa).

The next 14 membrane-spanning stretches (helical) occupy residues S6–V26, A40–G60, M69–I89, G106–S125, F129–R151, F164–A184, L207–F227, P239–I259, M276–T296, L302–V322, M337–L357, Y380–F400, S417–L437, and I464–M484.

The protein belongs to the complex I subunit 2 family. NDH-1 is composed of 14 different subunits. Subunits NuoA, H, J, K, L, M, N constitute the membrane sector of the complex.

It localises to the cell inner membrane. It carries out the reaction a quinone + NADH + 5 H(+)(in) = a quinol + NAD(+) + 4 H(+)(out). In terms of biological role, NDH-1 shuttles electrons from NADH, via FMN and iron-sulfur (Fe-S) centers, to quinones in the respiratory chain. The immediate electron acceptor for the enzyme in this species is believed to be ubiquinone. Couples the redox reaction to proton translocation (for every two electrons transferred, four hydrogen ions are translocated across the cytoplasmic membrane), and thus conserves the redox energy in a proton gradient. The chain is NADH-quinone oxidoreductase subunit N from Polaromonas naphthalenivorans (strain CJ2).